A 423-amino-acid polypeptide reads, in one-letter code: Probable histone-binding protein rbbD (423 aa).

WD repeat units follow at residues 119-159 (NHEG…LEPT), 172-212 (GHKK…KSDS), 222-262 (GHTS…KPIH), 266-306 (AHNS…NRLH), 310-350 (SHTD…EEQN), and 367-407 (GHTS…YNDR).

The protein belongs to the WD repeat RBAP46/RBAP48/MSI1 family. Probably binds directly to helix 1 of the histone fold of histone H4, a region that is not accessible when H4 is in chromatin.

Its subcellular location is the nucleus. In terms of biological role, core histone-binding subunit that may target chromatin assembly factors, chromatin remodeling factors and histone deacetylases to their histone substrates in a manner that is regulated by nucleosomal DNA. Component of several complexes which regulate chromatin metabolism. This chain is Probable histone-binding protein rbbD (rbbD), found in Dictyostelium discoideum (Social amoeba).